Here is a 413-residue protein sequence, read N- to C-terminus: Serpin A12 (413 aa).

The first 20 residues, methionine 1–leucine 20, serve as a signal peptide directing secretion. 2 N-linked (GlcNAc...) asparagine glycosylation sites follow: asparagine 92 and asparagine 267. The segment at glycine 364–arginine 382 is reactive center loop.

The protein belongs to the serpin family. Forms a stable complex with KLK7. Glycosylation slightly decreases affinity for heparin, but otherwise has no significant effect on KLK7 inhibitory activity or thermal stability of the protein. In terms of tissue distribution, expressed in visceral adipose tissues.

The protein localises to the secreted. Inhibition of KLK7 is enhanced by heparin. Adipokine that modulates insulin action by specifically inhibiting its target protease KLK7 in white adipose tissues. The protein is Serpin A12 (Serpina12) of Mus musculus (Mouse).